A 150-amino-acid polypeptide reads, in one-letter code: Large ribosomal subunit protein uL15 (150 aa).

The disordered stretch occupies residues 1–49; sequence MELHQLKSVSKSRNHKSKVVGRGHGSGLGKTSSRGQKGQKARKSGLTRL. Residues 10–21 are compositionally biased toward basic residues; it reads SKSRNHKSKVVG.

The protein belongs to the universal ribosomal protein uL15 family. Part of the 50S ribosomal subunit.

Its function is as follows. Binds to the 23S rRNA. The chain is Large ribosomal subunit protein uL15 from Mycoplasma genitalium (strain ATCC 33530 / DSM 19775 / NCTC 10195 / G37) (Mycoplasmoides genitalium).